Here is a 209-residue protein sequence, read N- to C-terminus: Large ribosomal subunit protein uL3 (209 aa).

The residue at position 150 (glutamine 150) is an N5-methylglutamine.

It belongs to the universal ribosomal protein uL3 family. As to quaternary structure, part of the 50S ribosomal subunit. Forms a cluster with proteins L14 and L19. Methylated by PrmB.

One of the primary rRNA binding proteins, it binds directly near the 3'-end of the 23S rRNA, where it nucleates assembly of the 50S subunit. The chain is Large ribosomal subunit protein uL3 from Pasteurella multocida (strain Pm70).